Here is a 316-residue protein sequence, read N- to C-terminus: 4-hydroxy-3-methylbut-2-enyl diphosphate reductase (316 aa).

C12 contributes to the [4Fe-4S] cluster binding site. H41 and H74 together coordinate (2E)-4-hydroxy-3-methylbut-2-enyl diphosphate. Residues H41 and H74 each contribute to the dimethylallyl diphosphate site. Positions 41 and 74 each coordinate isopentenyl diphosphate. Residue C96 participates in [4Fe-4S] cluster binding. (2E)-4-hydroxy-3-methylbut-2-enyl diphosphate is bound at residue H124. Residue H124 coordinates dimethylallyl diphosphate. Residue H124 coordinates isopentenyl diphosphate. Residue E126 is the Proton donor of the active site. (2E)-4-hydroxy-3-methylbut-2-enyl diphosphate is bound at residue T167. C197 is a binding site for [4Fe-4S] cluster. Residues S225, S226, N227, and S269 each coordinate (2E)-4-hydroxy-3-methylbut-2-enyl diphosphate. S225, S226, N227, and S269 together coordinate dimethylallyl diphosphate. Isopentenyl diphosphate contacts are provided by S225, S226, N227, and S269.

This sequence belongs to the IspH family. As to quaternary structure, homodimer. [4Fe-4S] cluster serves as cofactor.

It catalyses the reaction isopentenyl diphosphate + 2 oxidized [2Fe-2S]-[ferredoxin] + H2O = (2E)-4-hydroxy-3-methylbut-2-enyl diphosphate + 2 reduced [2Fe-2S]-[ferredoxin] + 2 H(+). It carries out the reaction dimethylallyl diphosphate + 2 oxidized [2Fe-2S]-[ferredoxin] + H2O = (2E)-4-hydroxy-3-methylbut-2-enyl diphosphate + 2 reduced [2Fe-2S]-[ferredoxin] + 2 H(+). Its pathway is isoprenoid biosynthesis; dimethylallyl diphosphate biosynthesis; dimethylallyl diphosphate from (2E)-4-hydroxy-3-methylbutenyl diphosphate: step 1/1. The protein operates within isoprenoid biosynthesis; isopentenyl diphosphate biosynthesis via DXP pathway; isopentenyl diphosphate from 1-deoxy-D-xylulose 5-phosphate: step 6/6. Catalyzes the conversion of 1-hydroxy-2-methyl-2-(E)-butenyl 4-diphosphate (HMBPP) into a mixture of isopentenyl diphosphate (IPP) and dimethylallyl diphosphate (DMAPP). Acts in the terminal step of the DOXP/MEP pathway for isoprenoid precursor biosynthesis. The sequence is that of 4-hydroxy-3-methylbut-2-enyl diphosphate reductase from Pectobacterium atrosepticum (strain SCRI 1043 / ATCC BAA-672) (Erwinia carotovora subsp. atroseptica).